The following is a 375-amino-acid chain: Trichodiene synthase (375 aa).

Belongs to the trichodiene synthase family.

The enzyme catalyses (2E,6E)-farnesyl diphosphate = trichodiene + diphosphate. The protein operates within sesquiterpene biosynthesis; trichothecene biosynthesis. In terms of biological role, TS is a member of the terpene cyclase group of enzymes. It catalyzes the isomerization and cyclization of farnesyl pyro-phosphate to form trichodiene, the first cyclic intermediate in the biosynthetic pathway for trichothecenes. It serves to branch trichothecene biosynthesis from the isoprenoid pathway. This chain is Trichodiene synthase (TRI5), found in Fusarium acaciae-mearnsii.